Reading from the N-terminus, the 154-residue chain is MADPGSVGHVFRRAFSWLPAQFASQSDAPVGAPRQFRSTEHLSIEAIAAFVDGELRMNAHLRAAHHLSLCAQCAAEVDDQSRARAALRDSHPIRIPSTLLGLLSEIPRCPPEGPSKGSSGGSSQGPPDGAAAGFGDRFADGDGGNRGRQSRVRR.

The residue at position 39 (threonine 39) is a Phosphothreonine; by PknB. Residues histidine 66, cysteine 70, and cysteine 73 each contribute to the Zn(2+) site. The tract at residues serine 104–arginine 154 is disordered. Over residues glutamine 124–aspartate 136 the composition is skewed to low complexity.

The protein belongs to the zinc-associated anti-sigma factor (ZAS) superfamily. As to quaternary structure, interacts with cognate ECF RNA polymerase sigma factor SigE under reducing conditions; this inhibits the interaction of SigE with the RNA polymerase catalytic core. Zn(2+) serves as cofactor. Post-translationally, phosphorylated by PknB on Thr-39; can be dephosphorylated (at least in vitro) by PstP. Phosphorylation is the signal for subsequent degradation by the ClpC1-ClpP2 complex. In terms of processing, degraded following vancomycin treatment (surface stress) by a ClpC1-ClpP2 complex.

The protein localises to the cytoplasm. An anti-sigma factor for extracytoplasmic function (ECF) sigma factor SigE. ECF sigma factors are held in an inactive form by an anti-sigma factor. This is Anti-sigma-E factor RseA (rseA) from Mycobacterium tuberculosis (strain ATCC 25618 / H37Rv).